The following is a 24-amino-acid chain: Hemocyanin subunit 4e (24 aa).

The protein belongs to the tyrosinase family. Hemocyanin subfamily. Hemolymph.

It is found in the secreted. The protein localises to the extracellular space. In terms of biological role, hemocyanins are copper-containing oxygen carriers occurring freely dissolved in the hemolymph of many mollusks and arthropods. In Maja squinado (Mediterranean spider crab), this protein is Hemocyanin subunit 4e.